Here is a 284-residue protein sequence, read N- to C-terminus: RNase adapter protein RapZ (284 aa).

8-15 (GRSGSGKS) is a binding site for ATP. Position 56–59 (56–59 (DVRN)) interacts with GTP. An RNA-binding region spans residues 266–284 (RSRGKNAQSRHRTLEKSKS).

This sequence belongs to the RapZ-like family. RapZ subfamily. Homotrimer.

Modulates the synthesis of GlmS, by affecting the processing and stability of the regulatory small RNA GlmZ. When glucosamine-6-phosphate (GlcN6P) concentrations are high in the cell, RapZ binds GlmZ and targets it to cleavage by RNase E. Consequently, GlmZ is inactivated and unable to activate GlmS synthesis. Under low GlcN6P concentrations, RapZ is sequestered and inactivated by an other regulatory small RNA, GlmY, preventing GlmZ degradation and leading to synthesis of GlmS. This Sodalis glossinidius (strain morsitans) protein is RNase adapter protein RapZ.